The following is a 1071-amino-acid chain: Carbamoyl phosphate synthase large chain (1071 aa).

A carboxyphosphate synthetic domain region spans residues 1–403 (MPKRTDLKSI…SFQKALRGLE (403 aa)). Positions 129, 169, 175, 176, 208, 210, 215, 241, 242, 243, 285, and 299 each coordinate ATP. Positions 133–328 (KEAMEKIGLS…IAKVAAKLAV (196 aa)) constitute an ATP-grasp 1 domain. Residues glutamine 285, glutamate 299, and asparagine 301 each contribute to the Mg(2+) site. Residues glutamine 285, glutamate 299, and asparagine 301 each contribute to the Mn(2+) site. The tract at residues 404–548 (TGLCGFNPRS…YSTYEEECEA (145 aa)) is oligomerization domain. The carbamoyl phosphate synthetic domain stretch occupies residues 549–930 (RPSDRKKVMI…AYYKAQLGAG (382 aa)). One can recognise an ATP-grasp 2 domain in the interval 673–864 (QKVLNDLGLR…LAKVGARCMA (192 aa)). Arginine 709, phenylalanine 748, leucine 750, glutamate 755, glycine 780, isoleucine 781, histidine 782, serine 783, glutamine 823, and glutamate 835 together coordinate ATP. Glutamine 823, glutamate 835, and asparagine 837 together coordinate Mg(2+). Mn(2+)-binding residues include glutamine 823, glutamate 835, and asparagine 837. The region spanning 931-1071 (ERLNPTGKIF…ELHGRLKNRS (141 aa)) is the MGS-like domain. Positions 931-1071 (ERLNPTGKIF…ELHGRLKNRS (141 aa)) are allosteric domain.

It belongs to the CarB family. As to quaternary structure, composed of two chains; the small (or glutamine) chain promotes the hydrolysis of glutamine to ammonia, which is used by the large (or ammonia) chain to synthesize carbamoyl phosphate. Tetramer of heterodimers (alpha,beta)4. Mg(2+) is required as a cofactor. It depends on Mn(2+) as a cofactor.

The catalysed reaction is hydrogencarbonate + L-glutamine + 2 ATP + H2O = carbamoyl phosphate + L-glutamate + 2 ADP + phosphate + 2 H(+). It catalyses the reaction hydrogencarbonate + NH4(+) + 2 ATP = carbamoyl phosphate + 2 ADP + phosphate + 2 H(+). It functions in the pathway amino-acid biosynthesis; L-arginine biosynthesis; carbamoyl phosphate from bicarbonate: step 1/1. The protein operates within pyrimidine metabolism; UMP biosynthesis via de novo pathway; (S)-dihydroorotate from bicarbonate: step 1/3. Functionally, large subunit of the glutamine-dependent carbamoyl phosphate synthetase (CPSase). CPSase catalyzes the formation of carbamoyl phosphate from the ammonia moiety of glutamine, carbonate, and phosphate donated by ATP, constituting the first step of 2 biosynthetic pathways, one leading to arginine and/or urea and the other to pyrimidine nucleotides. The large subunit (synthetase) binds the substrates ammonia (free or transferred from glutamine from the small subunit), hydrogencarbonate and ATP and carries out an ATP-coupled ligase reaction, activating hydrogencarbonate by forming carboxy phosphate which reacts with ammonia to form carbamoyl phosphate. This Neisseria meningitidis serogroup A / serotype 4A (strain DSM 15465 / Z2491) protein is Carbamoyl phosphate synthase large chain.